A 582-amino-acid polypeptide reads, in one-letter code: Threonine--tRNA ligase (582 aa).

A catalytic region spans residues 185–478 (DHRKLGKELE…LTEQYGGAFP (294 aa)). Zn(2+) contacts are provided by cysteine 278, histidine 329, and histidine 455.

The protein belongs to the class-II aminoacyl-tRNA synthetase family. As to quaternary structure, homodimer. The cofactor is Zn(2+).

It is found in the cytoplasm. It carries out the reaction tRNA(Thr) + L-threonine + ATP = L-threonyl-tRNA(Thr) + AMP + diphosphate + H(+). In terms of biological role, catalyzes the attachment of threonine to tRNA(Thr) in a two-step reaction: L-threonine is first activated by ATP to form Thr-AMP and then transferred to the acceptor end of tRNA(Thr). Also edits incorrectly charged L-seryl-tRNA(Thr). This is Threonine--tRNA ligase from Dehalococcoides mccartyi (strain ATCC BAA-2100 / JCM 16839 / KCTC 5957 / BAV1).